Here is a 191-residue protein sequence, read N- to C-terminus: CASP-like protein 1D1 (191 aa).

The Cytoplasmic segment spans residues 1–22 (MTSTSKDTPESGYAVPPPNLFG). The chain crosses the membrane as a helical span at residues 23–43 (VDFGLRLLLLASAVSALVVLV). The Extracellular segment spans residues 44–73 (TSKQTESIPTSLPPPFPAFISRDAKFQHSP). A helical transmembrane segment spans residues 74–94 (AFIYLLVALSVTCFYSIITMV). At 95 to 118 (ASFAAITSPSSSPRMLFHLVLSDA) the chain is on the cytoplasmic side. Residues 119–139 (VMAGVMASAAGTAGSVAYLGL) form a helical membrane-spanning segment. Residues 140-160 (KGNSHVNWNKVCNVYDKFCRH) lie on the Extracellular side of the membrane. The chain crosses the membrane as a helical span at residues 161–181 (VGSSAAVSLVASVLLVSLVVL). Over 182–191 (SSYSLYRRCR) the chain is Cytoplasmic.

The protein belongs to the Casparian strip membrane proteins (CASP) family. Homodimer and heterodimers.

The protein resides in the cell membrane. This is CASP-like protein 1D1 from Musa acuminata (Banana).